The following is a 344-amino-acid chain: MTDCWYIPEAVADRRDENRLSPNVPASYEVLGEAGIFYRHFDSEEVNDNIEGFIQPLLKKLNYQSYDVVNLSPANLGAEKFETLAEQHFMEHIHEDDEVRLILEGQGYFDVRDINDKWIRLLLKPGDCIVVPAGMYHRFTTDQSKCIKTLRIFKEAPQWIALNRGPEAEEKPARKEYLARLHAPAETAVGAVNGRTIFSLRYPLKLDAELTVITKRLLEQHSKQPLALAIYLTGSTDPTTGESWCPDCVLAKLHVARRFAELQGTYGKEHAIFLQLPVERASYLGNPNFFYRTHPILQLASVPTLLVLSPAKDAKEGGDVQWYDLLDVKVRTCDVDRTDVLNLE.

Positions 92, 94, 98, and 137 each coordinate Fe(2+). Ni(2+) contacts are provided by His92, His94, Glu98, and His137.

The protein belongs to the acireductone dioxygenase (ARD) family. Requires Fe(2+) as cofactor. Ni(2+) is required as a cofactor.

It localises to the cytoplasm. The protein resides in the nucleus. It catalyses the reaction 1,2-dihydroxy-5-(methylsulfanyl)pent-1-en-3-one + O2 = 4-methylsulfanyl-2-oxobutanoate + formate + 2 H(+). The catalysed reaction is 1,2-dihydroxy-5-(methylsulfanyl)pent-1-en-3-one + O2 = 3-(methylsulfanyl)propanoate + CO + formate + 2 H(+). It functions in the pathway amino-acid biosynthesis; L-methionine biosynthesis via salvage pathway; L-methionine from S-methyl-5-thio-alpha-D-ribose 1-phosphate: step 5/6. In terms of biological role, catalyzes 2 different reactions between oxygen and the acireductone 1,2-dihydroxy-3-keto-5-methylthiopentene (DHK-MTPene) depending upon the metal bound in the active site. Fe-containing acireductone dioxygenase (Fe-ARD) produces formate and 2-keto-4-methylthiobutyrate (KMTB), the alpha-ketoacid precursor of methionine in the methionine recycle pathway. Ni-containing acireductone dioxygenase (Ni-ARD) produces methylthiopropionate, carbon monoxide and formate, and does not lie on the methionine recycle pathway. This Leishmania major protein is Acireductone dioxygenase.